The sequence spans 237 residues: F-box only protein 50 (237 aa).

The region spanning 31–231 is the FBA domain; the sequence is VFETKPFERN…VTDSSVIVKA (201 aa). Positions 40-82 are disordered; sequence NLLQNPSPYGVNHTVPPPEPHRSGIPPPSDRPPQLEPEGNFSG. The segment covering 64–74 has biased composition (pro residues); the sequence is IPPPSDRPPQL.

Expressed in nonspecific cytotoxic cells (NCC).

It localises to the cytoplasm. Functionally, may promote cell proliferation. The chain is F-box only protein 50 (nccrp1) from Danio rerio (Zebrafish).